The chain runs to 370 residues: Isopentenyl-diphosphate delta-isomerase (370 aa).

Residue 8–9 coordinates substrate; it reads RK. FMN-binding positions include threonine 65, 66–68, serine 99, and asparagine 127; that span reads GMT. 99-101 is a binding site for substrate; the sequence is SQR. Substrate is bound at residue glutamine 166. A Mg(2+)-binding site is contributed by glutamate 167. Residues lysine 198, serine 223, threonine 228, 277 to 279, and 298 to 299 contribute to the FMN site; these read GMR and AL.

Belongs to the IPP isomerase type 2 family. In terms of assembly, homooctamer. Dimer of tetramers. The cofactor is FMN. It depends on NADPH as a cofactor. Requires Mg(2+) as cofactor.

Its subcellular location is the cytoplasm. It catalyses the reaction isopentenyl diphosphate = dimethylallyl diphosphate. In terms of biological role, involved in the biosynthesis of isoprenoids. Catalyzes the 1,3-allylic rearrangement of the homoallylic substrate isopentenyl (IPP) to its allylic isomer, dimethylallyl diphosphate (DMAPP). The chain is Isopentenyl-diphosphate delta-isomerase from Pyrococcus abyssi (strain GE5 / Orsay).